The following is a 170-amino-acid chain: Sec-independent protein translocase protein TatB (170 aa).

Residues 1–21 form a helical membrane-spanning segment; the sequence is MIDFGFDKIALIGAVALIVIG. Residues 69-170 form a disordered region; it reads AARNVEQSVS…VARFRPPRPL (102 aa). Residues 73–93 show a composition bias toward polar residues; it reads VEQSVSSEVNRTSSEMNQAWE. Residues 128-137 are compositionally biased toward basic residues; it reads HPRKNWRLKR.

This sequence belongs to the TatB family. The Tat system comprises two distinct complexes: a TatABC complex, containing multiple copies of TatA, TatB and TatC subunits, and a separate TatA complex, containing only TatA subunits. Substrates initially bind to the TatABC complex, which probably triggers association of the separate TatA complex to form the active translocon.

It localises to the cell inner membrane. Part of the twin-arginine translocation (Tat) system that transports large folded proteins containing a characteristic twin-arginine motif in their signal peptide across membranes. Together with TatC, TatB is part of a receptor directly interacting with Tat signal peptides. TatB may form an oligomeric binding site that transiently accommodates folded Tat precursor proteins before their translocation. The sequence is that of Sec-independent protein translocase protein TatB from Methylibium petroleiphilum (strain ATCC BAA-1232 / LMG 22953 / PM1).